Here is a 415-residue protein sequence, read N- to C-terminus: Squalene synthase 3 (415 aa).

2 helical membrane passes run 281 to 301 and 392 to 412; these read AIFR…ALCY and LIII…SNLP.

This sequence belongs to the phytoene/squalene synthase family. The cofactor is Mg(2+). Mn(2+) serves as cofactor.

The protein resides in the endoplasmic reticulum membrane. It carries out the reaction 2 (2E,6E)-farnesyl diphosphate + NADH + H(+) = squalene + 2 diphosphate + NAD(+). The catalysed reaction is 2 (2E,6E)-farnesyl diphosphate + NADPH + H(+) = squalene + 2 diphosphate + NADP(+). It functions in the pathway terpene metabolism; lanosterol biosynthesis; lanosterol from farnesyl diphosphate: step 1/3. Functionally, component of the triterpene saponins (e.g. ginsenosides or panaxosides) and phytosterols biosynthetic pathways. Catalyzes the biosynthesis of squalene. This chain is Squalene synthase 3, found in Panax ginseng (Korean ginseng).